We begin with the raw amino-acid sequence, 908 residues long: Probable serine/threonine-protein kinase DDB_G0278521 (908 aa).

Over 1-153 the chain is Extracellular; the sequence is MSNNKIIESL…RGEKLSTLDR (153 aa). The helical transmembrane segment at 154 to 174 threads the bilayer; that stretch reads IICFSIIYSQDQILLFLLNFI. At 175 to 908 the chain is on the cytoplasmic side; that stretch reads LSNINCNNNN…SDQNDSDLYD (734 aa). ANK repeat units follow at residues 258 to 289, 300 to 326, 330 to 361, 362 to 391, and 395 to 424; these read LKVY…NVYN, TNRS…NIHD, KGML…ALDQ, SNNT…RLSI, and NGRY…KMNS. Over residues 461–472 the composition is skewed to low complexity; it reads NSNNLTNSNSSS. Residues 461-491 are disordered; the sequence is NSNNLTNSNSSSVGGLRISNGGNTQQQSIQI. The span at 480–490 shows a compositional bias: polar residues; it reads NGGNTQQQSIQ. The ANK 6 repeat unit spans residues 495–524; sequence ENNTPIDLLVLNNHFTIAIELLKYEGYIVG. The Protein kinase domain occupies 530 to 817; sequence FKTARKIGAG…LPIANIPKFL (288 aa). ATP is bound by residues 536–544 and lysine 557; that span reads IGAGAFGDV. Residue aspartate 677 is the Proton acceptor of the active site.

Belongs to the protein kinase superfamily. TKL Ser/Thr protein kinase family.

It localises to the membrane. The catalysed reaction is L-seryl-[protein] + ATP = O-phospho-L-seryl-[protein] + ADP + H(+). The enzyme catalyses L-threonyl-[protein] + ATP = O-phospho-L-threonyl-[protein] + ADP + H(+). This is Probable serine/threonine-protein kinase DDB_G0278521 from Dictyostelium discoideum (Social amoeba).